The following is a 992-amino-acid chain: Exportin-T (992 aa).

The protein belongs to the exportin family.

Its subcellular location is the nucleus. It is found in the cytoplasm. TRNA nucleus export receptor which facilitates tRNA translocation across the nuclear pore complex. Involved in pre-tRNA splicing, probably by affecting the interaction of pre-tRNA with splicing endonuclease. This chain is Exportin-T (LOS1), found in Scheffersomyces stipitis (strain ATCC 58785 / CBS 6054 / NBRC 10063 / NRRL Y-11545) (Yeast).